We begin with the raw amino-acid sequence, 487 residues long: Probable Xaa-Pro aminopeptidase CPSG_02684 (487 aa).

Residues 1-10 (MAGSNTLSSS) are compositionally biased toward polar residues. The segment at 1-22 (MAGSNTLSSSEHGDDPRGHSYS) is disordered. 4 residues coordinate Mn(2+): D275, D286, E421, and E460.

Belongs to the peptidase M24B family. Mn(2+) serves as cofactor.

The enzyme catalyses Release of any N-terminal amino acid, including proline, that is linked to proline, even from a dipeptide or tripeptide.. In terms of biological role, catalyzes the removal of a penultimate prolyl residue from the N-termini of peptides. The chain is Probable Xaa-Pro aminopeptidase CPSG_02684 from Coccidioides posadasii (strain RMSCC 757 / Silveira) (Valley fever fungus).